The following is a 183-amino-acid chain: MLILASSSISRANLLKTAKIDFKQVGFDYDENLDKNISPFLYVQKIVLEKEKQFLSALSKDFQNQNLLFADSIVCIDEKILTKAKDKKEAYEMLALQNGKYASILSAFLLVKPEKRVFSLSKTTLYFKNFDENALNDYVENNLYKSKAGCIMCEGFHQNFITQQVGNLSTALGLDIQTLKAYL.

D71 functions as the Proton acceptor in the catalytic mechanism.

The protein belongs to the Maf family. Requires a divalent metal cation as cofactor.

The protein localises to the cytoplasm. The enzyme catalyses a ribonucleoside 5'-triphosphate + H2O = a ribonucleoside 5'-phosphate + diphosphate + H(+). The catalysed reaction is a 2'-deoxyribonucleoside 5'-triphosphate + H2O = a 2'-deoxyribonucleoside 5'-phosphate + diphosphate + H(+). Nucleoside triphosphate pyrophosphatase. May have a dual role in cell division arrest and in preventing the incorporation of modified nucleotides into cellular nucleic acids. In Campylobacter jejuni subsp. doylei (strain ATCC BAA-1458 / RM4099 / 269.97), this protein is Nucleoside triphosphate pyrophosphatase.